We begin with the raw amino-acid sequence, 264 residues long: DNA-directed RNA polymerase subunit Rpo3 (264 aa).

3 residues coordinate [3Fe-4S] cluster: Cys-203, Cys-206, and Cys-209.

Belongs to the archaeal Rpo3/eukaryotic RPB3 RNA polymerase subunit family. In terms of assembly, part of the RNA polymerase complex. [3Fe-4S] cluster is required as a cofactor.

It localises to the cytoplasm. It carries out the reaction RNA(n) + a ribonucleoside 5'-triphosphate = RNA(n+1) + diphosphate. In terms of biological role, DNA-dependent RNA polymerase (RNAP) catalyzes the transcription of DNA into RNA using the four ribonucleoside triphosphates as substrates. This is DNA-directed RNA polymerase subunit Rpo3 from Methanothermobacter thermautotrophicus (strain ATCC 29096 / DSM 1053 / JCM 10044 / NBRC 100330 / Delta H) (Methanobacterium thermoautotrophicum).